The following is a 337-amino-acid chain: 2-oxoglutarate receptor 1 (337 aa).

Residues 1–34 (MNEPLDYLANASDFPDYAAAFGNCTDENIPLKMH) lie on the Extracellular side of the membrane. Residues N10 and N23 are each glycosylated (N-linked (GlcNAc...) asparagine). A helical transmembrane segment spans residues 35-55 (YLPVIYGIIFLVGFPGNAVVI). The Cytoplasmic portion of the chain corresponds to 56 to 69 (STYIFKMRPWKSST). A helical membrane pass occupies residues 70–90 (IIMLNLACTDLLYLTSLPFLI). At 91-116 (HYYASGENWIFGDFMCKFIRFSFHFN) the chain is on the extracellular side. Cysteines 106 and 183 form a disulfide. A helical membrane pass occupies residues 117–137 (LYSSILFLTCFSIFRYCVIIH). Over 138-151 (PMSCFSIHKTRCAV) the chain is Cytoplasmic. Residues 152–172 (VACAVVWIISLVAVIPMTFLI) form a helical membrane-spanning segment. At 173-201 (TSTNRTNRSACLDLTSSDELNTIKWYNLI) the chain is on the extracellular side. 2 N-linked (GlcNAc...) asparagine glycosylation sites follow: N176 and N179. The chain crosses the membrane as a helical span at residues 202 to 222 (LTATTFCLPLVIVTLCYTTII). The Cytoplasmic portion of the chain corresponds to 223-242 (HTLTHGLQTDSCLKQKARRL). Residues 243 to 263 (TILLLLAFYVCFLPFHILRVI) traverse the membrane as a helical segment. Topologically, residues 264–284 (RIESRLLSISCSIENQIHEAY) are extracellular. The helical transmembrane segment at 285-305 (IVSRPLAALNTFGNLLLYVVV) threads the bilayer. Over 306 to 337 (SDNFQQAVCSTVRCKVSGNLEQAKKISYSNNP) the chain is Cytoplasmic.

This sequence belongs to the G-protein coupled receptor 1 family. In terms of tissue distribution, detected in kidney and, to a lower extent, in placenta. Not detected in brain tissues including the frontal cortex, caudate putamen, thalamus, hypothalamus, hippocampus or pons.

It localises to the cell membrane. In terms of biological role, g protein-coupled receptor for dicarboxylates and amino dicarboxylates. Receptor for itaconate, a metabolite produced by myeloid lineages. In the respiratory epithelium, couples the binding of itaconate to the activation of GNA11 and downstream intracellular Ca(2+) release, leading to mucocilliary clearance of airborne pathogens. Receptor for leukotriene E4 (LTE4) produced by mast cells upon allergic inflammation. Binds with high affinity to LTE4 and elicits mucin release from pulmonary epithelium in response to airborne fungi allergens. Regulates mucin-producing goblet cell homeostasis. Receptor for alpha-ketoglutarate produced by proximal tubule renal cells upon metabolic alkalosis. In an intrarenal paracrine signaling pathway, binds alpha-ketoglutarate and drives transepithelial salt reabsorption and bicarbonate secretion by SLC26A4/pendrin-positive intercalated cells. In Homo sapiens (Human), this protein is 2-oxoglutarate receptor 1 (OXGR1).